The primary structure comprises 462 residues: Argininosuccinate lyase (462 aa).

It belongs to the lyase 1 family. Argininosuccinate lyase subfamily.

It localises to the cytoplasm. The catalysed reaction is 2-(N(omega)-L-arginino)succinate = fumarate + L-arginine. The protein operates within amino-acid biosynthesis; L-arginine biosynthesis; L-arginine from L-ornithine and carbamoyl phosphate: step 3/3. The sequence is that of Argininosuccinate lyase from Bacillus thuringiensis (strain Al Hakam).